The primary structure comprises 378 residues: Phospho-N-acetylmuramoyl-pentapeptide-transferase (378 aa).

The next 11 helical transmembrane spans lie at Leu-26–Asn-46, Leu-57–Leu-77, Met-103–Ala-123, Leu-127–Trp-147, Gly-171–Val-191, Trp-195–Ala-215, Gly-225–Leu-245, Pro-247–Trp-267, Val-275–Ala-295, Leu-302–Tyr-322, and Ile-356–Trp-376.

The protein belongs to the glycosyltransferase 4 family. MraY subfamily. Mg(2+) is required as a cofactor.

It is found in the cell inner membrane. It catalyses the reaction UDP-N-acetyl-alpha-D-muramoyl-L-alanyl-gamma-D-glutamyl-meso-2,6-diaminopimeloyl-D-alanyl-D-alanine + di-trans,octa-cis-undecaprenyl phosphate = di-trans,octa-cis-undecaprenyl diphospho-N-acetyl-alpha-D-muramoyl-L-alanyl-D-glutamyl-meso-2,6-diaminopimeloyl-D-alanyl-D-alanine + UMP. The protein operates within cell wall biogenesis; peptidoglycan biosynthesis. Catalyzes the initial step of the lipid cycle reactions in the biosynthesis of the cell wall peptidoglycan: transfers peptidoglycan precursor phospho-MurNAc-pentapeptide from UDP-MurNAc-pentapeptide onto the lipid carrier undecaprenyl phosphate, yielding undecaprenyl-pyrophosphoryl-MurNAc-pentapeptide, known as lipid I. In Thermosynechococcus vestitus (strain NIES-2133 / IAM M-273 / BP-1), this protein is Phospho-N-acetylmuramoyl-pentapeptide-transferase.